The primary structure comprises 182 residues: Capsid protein (182 aa).

The disordered stretch occupies residues 136 to 182; the sequence is NAPILSTLPETTVVRRRRPSGRRTPSPRRRRSQSPRRRRSQSPASSC. The span at 149–175 shows a compositional bias: basic residues; the sequence is VRRRRPSGRRTPSPRRRRSQSPRRRRS. The Bipartite nuclear localization signal motif lies at 157 to 174; that stretch reads RRTPSPRRRRSQSPRRRR. Residues serine 161 and serine 169 each carry the phosphoserine; by host modification. Repeat copies occupy residues 161 to 168 and 169 to 176. Positions 161-176 are 2 X 8 AA repeats of S-P-R-R-R-[PR]-S-Q; it reads SPRRRRSQSPRRRRSQ. The tract at residues 176–182 is RNA binding; the sequence is QSPASSC.

Belongs to the orthohepadnavirus core antigen family. As to quaternary structure, homodimerizes, then multimerizes. Interacts with cytosol exposed regions of viral L glycoprotein present in the reticulum-to-Golgi compartment. Interacts with human FLNB. Phosphorylated form interacts with host importin alpha; this interaction depends on the exposure of the NLS, which itself depends upon genome maturation and/or phosphorylation of the capsid protein. Interacts with host NUP153. In terms of processing, phosphorylated by host SRPK1, SRPK2, and maybe protein kinase C or GAPDH. Phosphorylation is critical for pregenomic RNA packaging. Protein kinase C phosphorylation is stimulated by HBx protein and may play a role in transport of the viral genome to the nucleus at the late step during the viral replication cycle.

It is found in the virion. The protein resides in the host cytoplasm. Functionally, self assembles to form an icosahedral capsid. Most capsids appear to be large particles with an icosahedral symmetry of T=4 and consist of 240 copies of capsid protein, though a fraction forms smaller T=3 particles consisting of 180 capsid proteins. Entering capsids are transported along microtubules to the nucleus. Phosphorylation of the capsid is thought to induce exposure of nuclear localization signal in the C-terminal portion of the capsid protein that allows binding to the nuclear pore complex via the importin (karyopherin-) alpha and beta. Capsids are imported in intact form through the nuclear pore into the nuclear basket, where it probably binds NUP153. Only capsids that contain the mature viral genome can release the viral DNA and capsid protein into the nucleoplasm. Immature capsids get stuck in the basket. Capsids encapsulate the pre-genomic RNA and the P protein. Pre-genomic RNA is reverse-transcribed into DNA while the capsid is still in the cytoplasm. The capsid can then either be directed to the nucleus, providing more genomes for transcription, or bud through the endoplasmic reticulum to provide new virions. This chain is Capsid protein, found in Woolly monkey hepatitis B virus (isolate Louisville) (WMHBV).